Reading from the N-terminus, the 203-residue chain is VEL1-related protein SPBPB2B2.15 (203 aa).

A signal peptide spans M1–A16.

The protein belongs to the VEL1 family.

The protein localises to the cytoplasm. It localises to the cytosol. The polypeptide is VEL1-related protein SPBPB2B2.15 (Schizosaccharomyces pombe (strain 972 / ATCC 24843) (Fission yeast)).